Consider the following 705-residue polypeptide: Lethal(3)malignant brain tumor-like protein 2 (705 aa).

Residues 1 to 84 (MEKPPSIEET…GTPRSLDGSG (84 aa)) are disordered. Ser-13 carries the phosphoserine modification. Residues 15–25 (PMEEEEDDDLE) show a composition bias toward acidic residues. The span at 38–49 (SSVGSESSSYLE) shows a compositional bias: low complexity. Acidic residues predominate over residues 50–60 (ESSEAENEDRE). Ser-67 carries the phosphoserine modification. Thr-76 is modified (phosphothreonine). The FCS-type zinc finger occupies 81–116 (DGSGSEPAVCEMCGIVGTREAFFSKTKRFCSVSCSR). Zn(2+) contacts are provided by Cys-90, Cys-93, Cys-110, and Cys-114. MBT repeat units lie at residues 179–283 (FDWG…LVPP), 291–391 (TDWK…IKMS), 397–500 (MAHH…LTPP), and 508–604 (FNWE…LQPP). Phosphoserine is present on Ser-338. Residue Lys-405 forms a Glycyl lysine isopeptide (Lys-Gly) (interchain with G-Cter in SUMO2) linkage. The segment at 608–705 (EPATPLKAKE…VENIKQETDD (98 aa)) is disordered. The segment covering 619-634 (TKKKKKQFGKKRKRIP) has biased composition (basic residues). Glycyl lysine isopeptide (Lys-Gly) (interchain with G-Cter in SUMO2) cross-links involve residues Lys-647, Lys-659, and Lys-675. A phosphoserine mark is found at Ser-683, Ser-688, and Ser-689. Lys-700 participates in a covalent cross-link: Glycyl lysine isopeptide (Lys-Gly) (interchain with G-Cter in SUMO1); alternate. A Glycyl lysine isopeptide (Lys-Gly) (interchain with G-Cter in SUMO2); alternate cross-link involves residue Lys-700.

In terms of assembly, part of the E2F6.com-1 complex in G0 phase composed of E2F6, MGA, MAX, TFDP1, CBX3, BAT8, EUHMTASE1, RING1, RNF2, MBLR, BAT8 and YAF2.

It localises to the nucleus. Its function is as follows. Putative Polycomb group (PcG) protein. PcG proteins maintain the transcriptionally repressive state of genes, probably via a modification of chromatin, rendering it heritably changed in its expressibility. Its association with a chromatin-remodeling complex suggests that it may contribute to prevent expression of genes that trigger the cell into mitosis. Binds to monomethylated and dimethylated 'Lys-20' on histone H4. Binds histone H3 peptides that are monomethylated or dimethylated on 'Lys-4', 'Lys-9' or 'Lys-27'. In Pongo abelii (Sumatran orangutan), this protein is Lethal(3)malignant brain tumor-like protein 2 (L3MBTL2).